Here is a 178-residue protein sequence, read N- to C-terminus: ATP-dependent protease subunit HslV (178 aa).

The active site involves Thr-2. Positions 159, 162, and 165 each coordinate Na(+).

Belongs to the peptidase T1B family. HslV subfamily. In terms of assembly, a double ring-shaped homohexamer of HslV is capped on each side by a ring-shaped HslU homohexamer. The assembly of the HslU/HslV complex is dependent on binding of ATP.

It localises to the cytoplasm. The enzyme catalyses ATP-dependent cleavage of peptide bonds with broad specificity.. With respect to regulation, allosterically activated by HslU binding. In terms of biological role, protease subunit of a proteasome-like degradation complex believed to be a general protein degrading machinery. The sequence is that of ATP-dependent protease subunit HslV from Buchnera aphidicola subsp. Cinara cedri (strain Cc).